The sequence spans 158 residues: SsrA-binding protein (158 aa).

Positions 131–158 are disordered; it reads GKKTHDKRETEKKRDWNREKARLLRDRG. Residues 136 to 158 show a composition bias toward basic and acidic residues; sequence DKRETEKKRDWNREKARLLRDRG.

The protein belongs to the SmpB family.

It localises to the cytoplasm. In terms of biological role, required for rescue of stalled ribosomes mediated by trans-translation. Binds to transfer-messenger RNA (tmRNA), required for stable association of tmRNA with ribosomes. tmRNA and SmpB together mimic tRNA shape, replacing the anticodon stem-loop with SmpB. tmRNA is encoded by the ssrA gene; the 2 termini fold to resemble tRNA(Ala) and it encodes a 'tag peptide', a short internal open reading frame. During trans-translation Ala-aminoacylated tmRNA acts like a tRNA, entering the A-site of stalled ribosomes, displacing the stalled mRNA. The ribosome then switches to translate the ORF on the tmRNA; the nascent peptide is terminated with the 'tag peptide' encoded by the tmRNA and targeted for degradation. The ribosome is freed to recommence translation, which seems to be the essential function of trans-translation. This Brucella ovis (strain ATCC 25840 / 63/290 / NCTC 10512) protein is SsrA-binding protein.